Reading from the N-terminus, the 129-residue chain is NADH-ubiquinone oxidoreductase chain 3 (129 aa).

Helical transmembrane passes span 4–24 (FYMYLAPIVAGVLIGLNWLLA), 48–68 (AAFSVAFILVAILFLPFDLEI), and 82–102 (GLYGLIILIIFLMMLVIAFIL).

This sequence belongs to the complex I subunit 3 family.

It is found in the mitochondrion membrane. It catalyses the reaction a ubiquinone + NADH + 5 H(+)(in) = a ubiquinol + NAD(+) + 4 H(+)(out). Core subunit of the mitochondrial membrane respiratory chain NADH dehydrogenase (Complex I) that is believed to belong to the minimal assembly required for catalysis. Complex I functions in the transfer of electrons from NADH to the respiratory chain. The immediate electron acceptor for the enzyme is believed to be ubiquinone. This is NADH-ubiquinone oxidoreductase chain 3 (NAD3) from Candida albicans (strain SC5314 / ATCC MYA-2876) (Yeast).